The sequence spans 200 residues: MSNSAQRDARNSRDESARASDTDRIQIAQLLAYAAEQGRLQLTDYEDRLARAYAATTYQELDRLRADLPGAAIGPRRGGECNPAPSTLLLALLGGFERRGRWNVPKKLTTFTLWGSGVLDLRYADFTSTEVDIRAYSIMGAQTILLPPEVNVEIHGHRVMGGFDRKVVGEGTRGVPTVRIRGFSLWGDVGIKRKPRKPRK.

The disordered stretch occupies residues 1–21; that stretch reads MSNSAQRDARNSRDESARASD. Basic and acidic residues predominate over residues 7 to 21; sequence RDARNSRDESARASD.

This is an uncharacterized protein from Mycobacterium tuberculosis (strain ATCC 25618 / H37Rv).